Reading from the N-terminus, the 461-residue chain is TWiK family of potassium channels protein 18 (461 aa).

The Cytoplasmic portion of the chain corresponds to 1–21; that stretch reads MAIVAQGVSTILTTFQKTFKG. The chain crosses the membrane as a helical span at residues 22 to 42; the sequence is LLPLIILVAYTLLGAWIFWMI. N-linked (GlcNAc...) asparagine glycosylation occurs at Asn-88. An intramembrane region (pore-forming) is located at residues 116–136; it reads FLGSIFYCMTVYTTIGYGNIV. The helical transmembrane segment at 144–164 threads the bilayer; that stretch reads FATILYAFIGIPLTVLSLYCL. At 165–224 the chain is on the cytoplasmic side; it reads GSLFAKGCKMLWRFFLKSTRVVSKDLSNKISEAADNIEEGTTAITPSAEKTENNDDDLLS. A helical transmembrane segment spans residues 225–245; that stretch reads FPISGLLLITVIWVIFCAVLF. Residues 253 to 273 constitute an intramembrane region (pore-forming); it reads FGTSLYFTLISFTTIGFGDIL. A helical membrane pass occupies residues 281–301; the sequence is PIVGVLLLIGLSLVSTVMTLI. The Cytoplasmic segment spans residues 302-461; it reads QQQIEALASG…GNEDYLEHDI (160 aa). The tract at residues 328–347 is disordered; sequence REDGEVDEHVDPEEDPENNK.

Belongs to the two pore domain potassium channel (TC 1.A.1.8) family. As to expression, expressed in body wall muscle.

The protein localises to the membrane. Outwardly rectifying potassium channel protein; activity is sharply augmented by increase in temperature. This chain is TWiK family of potassium channels protein 18 (twk-18), found in Caenorhabditis elegans.